A 345-amino-acid chain; its full sequence is Probable aldo-keto reductase 3 (345 aa).

Catalysis depends on Tyr-63, which acts as the Proton donor. Position 130 (His-130) interacts with substrate. An NADP(+)-binding site is contributed by 209–219; sequence SPLGRGFFASG.

Belongs to the aldo/keto reductase family.

The chain is Probable aldo-keto reductase 3 from Arabidopsis thaliana (Mouse-ear cress).